Here is an 897-residue protein sequence, read N- to C-terminus: Translation initiation factor IF-2 (897 aa).

Residues Asn-402–Glu-570 form the tr-type G domain. The tract at residues Gly-411–Thr-418 is G1. Position 411 to 418 (Gly-411 to Thr-418) interacts with GTP. The interval Gly-436 to Asn-440 is G2. Residues Asp-458 to Gly-461 are G3. GTP contacts are provided by residues Asp-458–His-462 and Asn-512–Asp-515. The tract at residues Asn-512–Asp-515 is G4. The segment at Ser-548–Val-550 is G5.

The protein belongs to the TRAFAC class translation factor GTPase superfamily. Classic translation factor GTPase family. IF-2 subfamily.

It localises to the cytoplasm. Its function is as follows. One of the essential components for the initiation of protein synthesis. Protects formylmethionyl-tRNA from spontaneous hydrolysis and promotes its binding to the 30S ribosomal subunits. Also involved in the hydrolysis of GTP during the formation of the 70S ribosomal complex. This is Translation initiation factor IF-2 from Blochmanniella floridana.